A 486-amino-acid chain; its full sequence is Achaete-scute complex protein T8 (486 aa).

2 disordered regions span residues 1 to 26 (MAAL…GIKT) and 75 to 158 (AAST…LPLP). Over residues 75–86 (AASTTNTTPISS) the composition is skewed to polar residues. Positions 159–223 (QAVARRNARE…RMAVEYIRSL (65 aa)) constitute a bHLH domain.

Efficient DNA binding requires dimerization with another bHLH protein. L(1)SC, SC and AC strongly label the presumptive stomatogastric nervous system, while ASE is more prominent in the presumptive procephalic lobe.

Involved in the determination of the neuronal precursors of optic lobes in the central nervous system. The protein is Achaete-scute complex protein T8 (ase) of Drosophila melanogaster (Fruit fly).